The following is a 291-amino-acid chain: 4-hydroxy-tetrahydrodipicolinate synthase (291 aa).

Thr44 contributes to the pyruvate binding site. The active-site Proton donor/acceptor is Tyr132. Lys160 serves as the catalytic Schiff-base intermediate with substrate. Ile202 is a binding site for pyruvate.

It belongs to the DapA family. As to quaternary structure, homotetramer; dimer of dimers.

The protein localises to the cytoplasm. The catalysed reaction is L-aspartate 4-semialdehyde + pyruvate = (2S,4S)-4-hydroxy-2,3,4,5-tetrahydrodipicolinate + H2O + H(+). The protein operates within amino-acid biosynthesis; L-lysine biosynthesis via DAP pathway; (S)-tetrahydrodipicolinate from L-aspartate: step 3/4. In terms of biological role, catalyzes the condensation of (S)-aspartate-beta-semialdehyde [(S)-ASA] and pyruvate to 4-hydroxy-tetrahydrodipicolinate (HTPA). The chain is 4-hydroxy-tetrahydrodipicolinate synthase from Parvibaculum lavamentivorans (strain DS-1 / DSM 13023 / NCIMB 13966).